Reading from the N-terminus, the 137-residue chain is Large ribosomal subunit protein uL16 (137 aa).

It belongs to the universal ribosomal protein uL16 family. In terms of assembly, part of the 50S ribosomal subunit.

In terms of biological role, binds 23S rRNA and is also seen to make contacts with the A and possibly P site tRNAs. The chain is Large ribosomal subunit protein uL16 from Legionella pneumophila (strain Paris).